Reading from the N-terminus, the 76-residue chain is Potassium/proton antiporter CemA (76 aa).

The helical transmembrane segment at glutamine 35–phenylalanine 52 threads the bilayer.

This sequence belongs to the CemA family.

It is found in the plastid. Its subcellular location is the chloroplast inner membrane. The catalysed reaction is K(+)(in) + H(+)(out) = K(+)(out) + H(+)(in). Functionally, contributes to K(+)/H(+) antiport activity by supporting proton efflux to control proton extrusion and homeostasis in chloroplasts in a light-dependent manner to modulate photosynthesis. Prevents excessive induction of non-photochemical quenching (NPQ) under continuous-light conditions. Indirectly promotes efficient inorganic carbon uptake into chloroplasts. This Vicia faba (Broad bean) protein is Potassium/proton antiporter CemA.